A 91-amino-acid chain; its full sequence is UPF0358 protein SAS1047 (91 aa).

It belongs to the UPF0358 family.

The chain is UPF0358 protein SAS1047 from Staphylococcus aureus (strain MSSA476).